The sequence spans 461 residues: ATP synthase subunit beta (461 aa).

An ATP-binding site is contributed by 151–158; it reads GGAGVGKT.

Belongs to the ATPase alpha/beta chains family. F-type ATPases have 2 components, CF(1) - the catalytic core - and CF(0) - the membrane proton channel. CF(1) has five subunits: alpha(3), beta(3), gamma(1), delta(1), epsilon(1). CF(0) has three main subunits: a(1), b(2) and c(9-12). The alpha and beta chains form an alternating ring which encloses part of the gamma chain. CF(1) is attached to CF(0) by a central stalk formed by the gamma and epsilon chains, while a peripheral stalk is formed by the delta and b chains.

The protein resides in the cell inner membrane. The catalysed reaction is ATP + H2O + 4 H(+)(in) = ADP + phosphate + 5 H(+)(out). Its function is as follows. Produces ATP from ADP in the presence of a proton gradient across the membrane. The catalytic sites are hosted primarily by the beta subunits. This Coxiella burnetii (strain RSA 331 / Henzerling II) protein is ATP synthase subunit beta.